The sequence spans 287 residues: ATP synthase gamma chain (287 aa).

This sequence belongs to the ATPase gamma chain family. As to quaternary structure, F-type ATPases have 2 components, CF(1) - the catalytic core - and CF(0) - the membrane proton channel. CF(1) has five subunits: alpha(3), beta(3), gamma(1), delta(1), epsilon(1). CF(0) has three main subunits: a, b and c.

It is found in the cell inner membrane. Functionally, produces ATP from ADP in the presence of a proton gradient across the membrane. The gamma chain is believed to be important in regulating ATPase activity and the flow of protons through the CF(0) complex. In Edwardsiella ictaluri (strain 93-146), this protein is ATP synthase gamma chain.